Here is a 276-residue protein sequence, read N- to C-terminus: 3' cyclic ADP-D-ribose synthase HopAM1 (276 aa).

Over residues 20–38 (VEASQVKSAGTSSTTNIDS) the composition is skewed to polar residues. A disordered region spans residues 20-39 (VEASQVKSAGTSSTTNIDSK). A TIR domain region spans residues 165-214 (KNGIAHAKKMAFFITPEWLGSDFCKQEFQWLSETKNKDIKSAFVIFKDVD). Residue Q190 is part of the active site.

In terms of assembly, homodimer.

It localises to the host cytoplasm. It is found in the host cytosol. The enzyme catalyses NAD(+) = 3'cADPR + nicotinamide + H(+). NAD(+) hydrolase (NADase) that cleaves NAD(+) into nicotinamide and 3' cyclic ADP-D-ribose (3'cADPR, v2-cADPR). Upon infiltration of A.thaliana with this bacteria an effector-triggered immunity-like phenotype (ETI-like, cell death with severe chlorosis) is seen, 3'cADPR levels rise while NAD(+) levels remain constant. Plant immune responses are suppressed. Triggers hypersensitive response-like cell death in Nicotiana tabacum cv. Xanthi and N.benthamiana when transiently expressed, depletes NAD(+) in N.benthamiana. Causes cell death upon induction in yeast due to NAD(+) depletion and/or 3'cADPR itself. Transgenic A.thaliana expressing HopAM1 suppresses its plant immune system upon challenge; the plants produce 3'cADPR without significantly depleting NAD(+). The polypeptide is 3' cyclic ADP-D-ribose synthase HopAM1 (Pseudomonas syringae pv. tomato (strain ATCC BAA-871 / DC3000)).